Reading from the N-terminus, the 1344-residue chain is MGSRVPIETIEEDGEFDWEAAVKEIDLACLKTTNASSSSSSHFTPLANPPITANLTKPPAKRQSTLDKFIGRTEHKPENHQVVSECGVNDNDNSPLVGIDPEAAKTWIYPVNGSVPLRDYQFAITKTALFSNTLVALPTGLGKTLIAAVVMYNYFRWFPQGKIVFAAPSRPLVMQQIEACHNIVGIPQEWTIDLTGQTCPSKRAFLWKSKRVFFVTPQVLEKDIQSGTCLTNYLVCLVIDEAHRALGNYSYCVVVRELMAVPIQLRILALTATPGSKTQAIQGIIDNLQISTLEYRNESDHDVCPYVHDRKLEVIEVPLGQDADDVSKRLFHVIRPYAVRLKNFGVNLNRDIQTLSPHEVLMARDKFRQAPLPGLPHVNHGDVESCFAALITLYHIRKLLSSHGIRPAYEMLEEKLKEGPFARLMSKNEDIRMTKLLMQQRLSHGAPSPKLSKMLEILVDHFKVKDPKTSRVIIFSNFRGSVRDIMNALSNIGDMVKATEFIGQSSGKTLKGQSQKIQQAVLEKFRAGGFNVIVATSIGEEGLDIMEVDLVICFDANVSPLRMIQRMGRTGRKNNGRVVVLACEGSEKNSYMRKQASGRAIKKHMRNGGTNSFNFHPSPRMIPHVYKPEVQHVEFSIKQFVPRGKKLQEEYATETPAFQKKLTPAETHMLAKYYNNPDEEKLRVSLIAFPHFQTLPSKVHKVMHSRQTGMLIDAMQHLQEPTFSEQSKSFFTEFRAPLGEREELDTGLRVTNDPKDLHSVRDLEVNTSQRKAKQVESPTSTLETTEKDYEESSPTHRYLFSSECASVDTLGNVFVMPVPLLFFPNVLESDNTPLPKTEKQHSCRNTSHIDLVPVDTSEKHRQDNISCKLKERFSPDGASETLETHSLVKRNSTRVGEDDVANSVGEIVLSSDEDDCEGLELSPRLTNFIKSGIVPESPVYDQGEANREEDLEFPQLSSPMRFSNELAGESSFPERKVQHKCNDYNIVSTTTELRTPQKEVGLANGTECLAVSPIPEDWRTPLANLTNTNSSARKDWRVSSGEKLETLRQPRKLKRLRRLGDCSSAVKENYPGITEADHIRSRSRGKKHIRGKKKMIMDDDVQVFIDEEAEVSSGAEMSADENEDVTGDSFEDSFIDDGTMPTANTQAESGKVDMMAVYRRSLLSQSPLPARFRDLAASSLSPYSAGPLTRINESRSDSDKSLSSLRTPKTTNSESNQDAMMIGNLSVVQISSDSRKRKFSLCNSANAPVINLESKFAAHAQATEKESHEGVRSNAGALEYNDDDDDAFFATLDFDAMEAQATLLLSKQRSEAKEKEDATVIPNPGMQRSDGMEKDAPSFDLGLW.

A disordered region spans residues 39 to 61 (SSSHFTPLANPPITANLTKPPAK). Residues 124–292 (ITKTALFSNT…GIIDNLQIST (169 aa)) enclose the Helicase ATP-binding domain. Residue 137–144 (LPTGLGKT) participates in ATP binding. Positions 240–243 (DEAH) match the DEAH box motif. Positions 450-621 (KLSKMLEILV…SFNFHPSPRM (172 aa)) constitute a Helicase C-terminal domain. Disordered stretches follow at residues 765–790 (VNTS…KDYE), 1110–1148 (EVSS…TQAE), 1183–1218 (YSAG…SNQD), and 1307–1344 (KQRS…LGLW). A compositionally biased stretch (acidic residues) spans 1118–1135 (SADENEDVTGDSFEDSFI). Residues 1207–1218 (TPKTTNSESNQD) are compositionally biased toward polar residues. Residues 1308–1318 (QRSEAKEKEDA) show a composition bias toward basic and acidic residues.

It belongs to the DEAD box helicase family. DEAH subfamily. FANCM sub-subfamily.

The protein resides in the nucleus. The catalysed reaction is ATP + H2O = ADP + phosphate + H(+). Functionally, involved in ordered homologous recombination (HR) events in somatic and meiotic cells. Involved in the suppression of spontaneous HR events in somatic cells. Has an opposite function to the DNA binding cofactor MHF1 which promotes spontaneous HR. Functions in replicative repair independently of MHF1 and in a parallel pathway to the endonuclease MUS81. Acts in the same pathway as the two DNA-binding cofactors MHF1 and MHF2 to restrain class II meiotic crossover (CO), and acts exclusively with MHF1 and MHF2 during meiosis to repair DNA interstrand cross-links (ICLs). This common pathway is in parallel to the pathway that involves the RECQ4A helicase. Seems to be involved in the stabilization of recombination intermediates. Involved in DNA double-strand break (DSB) repair during meiosis. Required for synthesis-dependent strand annealing (SDSA) and to a lesser extent for single-strand annealing (SSA). May process meiotic DSB repair intermediates, possibly D-loops, driving them toward noncrossover (NCO) resolution. The polypeptide is DEAD-box ATP-dependent RNA helicase FANCM (Arabidopsis thaliana (Mouse-ear cress)).